A 434-amino-acid chain; its full sequence is MSADGAEADGSTQVTVEEPVQQPSVVDRVASMPLISSTCDMVSAAYASTKESYPHIKTVCDAAEKGVRTLTAAAVSGAQPILSKLEPQIASASEYAHRGLDKLEENLPILQQPTEKVLADTKELVSSKVSGAQEMVSSAKDTVATQLSEAVDATRGAVQSGVDKTKSVVTGGVQSVMGSRLGQMVLSGVDTVLGKSEEWADNHLPLTDAELARIATSLDGFDVASVQQQRQEQSYFVRLGSLSERLRQHAYEHSLGKLRATKQRAQEALLQLSQVLSLMETVKQGVDQKLVEGQEKLHQMWLSWNQKQLQGPEKEPPKPEQVESRALTMFRDIAQQLQATCTSLGSSIQGLPTNVKDQVQQARRQVEDLQATFSSIHSFQDLSSSILAQSRERVASAREALDHMVEYVAQNTPVTWLVGPFAPGITEKAPEEKK.

The tract at residues 1–22 is disordered; that stretch reads MSADGAEADGSTQVTVEEPVQQ. Ser-2 is modified (N-acetylserine). Position 31 is a phosphoserine (Ser-31). Lys-65 is modified (N6-acetyllysine). Phosphoserine is present on Ser-91. Lys-122 is covalently cross-linked (Glycyl lysine isopeptide (Lys-Gly) (interchain with G-Cter in SUMO1)). Phosphoserine occurs at positions 130 and 148. Thr-170 is subject to Phosphothreonine. Phosphoserine is present on residues Ser-175 and Ser-179. Thr-216 is modified (phosphothreonine). Phosphoserine is present on residues Ser-217 and Ser-241. Tyr-251 is modified (phosphotyrosine). 2 coiled-coil regions span residues 252–277 and 353–377; these read EHSL…QVLS and TNVK…SSIH.

Belongs to the perilipin family. As to quaternary structure, homooligomer. Interacts with M6PR (via the cytoplasmic domain). Interacts with IGF2R (via the cytoplasmic domain). In terms of assembly, may exist as a homodimer. Post-translationally, phosphorylation at Tyr-251 by isoform 1 of CHKA (CHKalpha2) promotes dissociation from lipid droplets: dissociation is followed by recruitment of autophagosome machinery to lipid droplets and subsequent lipid droplet lipolysis.

The protein resides in the lipid droplet. The protein localises to the endosome membrane. Its subcellular location is the cytoplasm. Functionally, structural component of lipid droplets, which is required for the formation and maintenance of lipid storage droplets. Required for the transport of mannose 6-phosphate receptors (MPR) from endosomes to the trans-Golgi network. In Homo sapiens (Human), this protein is Perilipin-3 (PLIN3).